The primary structure comprises 155 residues: Small ribosomal subunit protein uS8m (155 aa).

This sequence belongs to the universal ribosomal protein uS8 family. Component of the mitochondrial small ribosomal subunit (mt-SSU). Mature yeast 74S mitochondrial ribosomes consist of a small (37S) and a large (54S) subunit. The 37S small subunit contains a 15S ribosomal RNA (15S mt-rRNA) and 34 different proteins. The 54S large subunit contains a 21S rRNA (21S mt-rRNA) and 46 different proteins.

The protein localises to the mitochondrion. In terms of biological role, component of the mitochondrial ribosome (mitoribosome), a dedicated translation machinery responsible for the synthesis of mitochondrial genome-encoded proteins, including at least some of the essential transmembrane subunits of the mitochondrial respiratory chain. The mitoribosomes are attached to the mitochondrial inner membrane and translation products are cotranslationally integrated into the membrane. This is Small ribosomal subunit protein uS8m (MRPS8) from Saccharomyces cerevisiae (strain ATCC 204508 / S288c) (Baker's yeast).